The following is a 238-amino-acid chain: Pyridoxine 5'-phosphate synthase (238 aa).

N7 is a 3-amino-2-oxopropyl phosphate binding site. Residue 9–10 participates in 1-deoxy-D-xylulose 5-phosphate binding; it reads DH. Residue R18 participates in 3-amino-2-oxopropyl phosphate binding. The active-site Proton acceptor is the H43. R45 and H50 together coordinate 1-deoxy-D-xylulose 5-phosphate. E70 acts as the Proton acceptor in catalysis. T100 is a binding site for 1-deoxy-D-xylulose 5-phosphate. The Proton donor role is filled by H191. Residues G192 and 213 to 214 contribute to the 3-amino-2-oxopropyl phosphate site; that span reads GH.

This sequence belongs to the PNP synthase family. As to quaternary structure, homooctamer; tetramer of dimers.

Its subcellular location is the cytoplasm. The enzyme catalyses 3-amino-2-oxopropyl phosphate + 1-deoxy-D-xylulose 5-phosphate = pyridoxine 5'-phosphate + phosphate + 2 H2O + H(+). It functions in the pathway cofactor biosynthesis; pyridoxine 5'-phosphate biosynthesis; pyridoxine 5'-phosphate from D-erythrose 4-phosphate: step 5/5. Functionally, catalyzes the complicated ring closure reaction between the two acyclic compounds 1-deoxy-D-xylulose-5-phosphate (DXP) and 3-amino-2-oxopropyl phosphate (1-amino-acetone-3-phosphate or AAP) to form pyridoxine 5'-phosphate (PNP) and inorganic phosphate. The sequence is that of Pyridoxine 5'-phosphate synthase from Thermosynechococcus vestitus (strain NIES-2133 / IAM M-273 / BP-1).